The following is a 911-amino-acid chain: Alpha-actinin-4 (911 aa).

Residues 1–269 are actin-binding; the sequence is MVDYHAANQS…YVSSFYHAFS (269 aa). Residues 8–31 form a disordered region; it reads NQSYQYGPSSGSNGAGGGGTMGDY. An interaction with VCL region spans residues 12-26; it reads QYGPSSGSNGAGGGG. A Phosphotyrosine modification is found at Y31. The interval 40–61 is interaction with VCL; it reads RDLLLDPAWEKQQRKTFTAWCN. 2 Calponin-homology (CH) domains span residues 50 to 154 and 163 to 269; these read KQQR…LRFA and TSAK…HAFS. The LXXLL motif motif lies at 84–88; that stretch reads LMLLL. The interaction with VCL stretch occupies residues 108 to 126; the sequence is KINNVNKALDFIASKGVKL. K114 carries the post-translational modification N6-acetyllysine. The polyphosphoinositide (PIP2)-binding stretch occupies residues 177–192; it reads TAPYKNVNVQNFHISW. Position 214 is an N6-acetyllysine (K214). A Phosphothreonine modification is found at T249. Spectrin repeat units follow at residues 293-403, 413-518, 528-639, and 649-752; these read HLME…WLLN, HLAE…ALEK, QLHL…ALLE, and HLRR…EVEN. N6-acetyllysine is present on residues K592 and K625. Position 696 is a phosphoserine (S696). The interval 736–911 is mediates interaction with MICALL2; the sequence is WEQLLTTIAR…STALYGESDL (176 aa). EF-hand domains follow at residues 765–800 and 806–841; these read EQMQ…LGYD and QGDA…ETTD. A Ca(2+)-binding site is contributed by D778. K779 bears the N6-acetyllysine mark. 2 residues coordinate Ca(2+): D780 and E789. N6-acetyllysine is present on K859. At S909 the chain carries Phosphoserine.

The protein belongs to the alpha-actinin family. In terms of assembly, homodimer; antiparallel. Identified in a IGF2BP1-dependent mRNP granule complex containing untranslated mRNAs. Component of the CART complex, at least composed of ACTN4, HGS/HRS, MYO5B and TRIM3. Binds TRIM3 at the N-terminus. Interacts with MAGI1. Interacts with PDLIM2. Identified in a complex with CASK, IQGAP1, MAGI2, NPHS1, SPTAN1 and SPTBN1. Interacts with MICALL2 (preferentially in opened conformation); stimulated by RAB13 activation. Interacts with PPARG and RARA. Binds to VCL; this interaction triggers VCL conformational changes. Interacts with SEPTIN14. Interacts with IGSF8.

The protein resides in the nucleus. The protein localises to the cytoplasm. It localises to the cell junction. It is found in the cytoskeleton. Its subcellular location is the stress fiber. The protein resides in the perinuclear region. F-actin cross-linking protein which is thought to anchor actin to a variety of intracellular structures. This is a bundling protein. Probably involved in vesicular trafficking via its association with the CART complex. The CART complex is necessary for efficient transferrin receptor recycling but not for EGFR degradation. Involved in tight junction assembly in epithelial cells probably through interaction with MICALL2. Links MICALL2 to the actin cytoskeleton and recruits it to the tight junctions. May also function as a transcriptional coactivator, stimulating transcription mediated by the nuclear hormone receptors PPARG and RARA. Association with IGSF8 regulates the immune synapse formation and is required for efficient T-cell activation. The protein is Alpha-actinin-4 of Bos taurus (Bovine).